Here is a 135-residue protein sequence, read N- to C-terminus: MFRTMLKSKIHRATVTQADLHYVGSVTVDADLMDAADLIEGEQVTIVDIENGARLVTYVITGERGSGVIGINGAAAHLVHPGDLVILIAYGTMEDAEARAYRPRVVFVDADNRPIDLGVDPAYVPPDAGELLSPR.

The active-site Schiff-base intermediate with substrate; via pyruvic acid is Ser-25. Residue Ser-25 is modified to Pyruvic acid (Ser). Thr-57 is a binding site for substrate. Tyr-58 functions as the Proton donor in the catalytic mechanism. 73–75 contacts substrate; the sequence is GAA.

The protein belongs to the PanD family. In terms of assembly, heterooctamer of four alpha and four beta subunits. The cofactor is pyruvate. In terms of processing, is synthesized initially as an inactive proenzyme, which is activated by self-cleavage at a specific serine bond to produce a beta-subunit with a hydroxyl group at its C-terminus and an alpha-subunit with a pyruvoyl group at its N-terminus.

The protein localises to the cytoplasm. It carries out the reaction L-aspartate + H(+) = beta-alanine + CO2. It functions in the pathway cofactor biosynthesis; (R)-pantothenate biosynthesis; beta-alanine from L-aspartate: step 1/1. Functionally, catalyzes the pyruvoyl-dependent decarboxylation of aspartate to produce beta-alanine. The sequence is that of Aspartate 1-decarboxylase from Mycolicibacterium vanbaalenii (strain DSM 7251 / JCM 13017 / BCRC 16820 / KCTC 9966 / NRRL B-24157 / PYR-1) (Mycobacterium vanbaalenii).